Reading from the N-terminus, the 159-residue chain is MQCPTCQNTDSRVLESRSADSGKSVRRRRECLNCSFRFTTYERVETMPVSVLKKDGGRELFDKQKLFTGISRACEKTNFSSEEIINFVDGIESQIVQDSNKDIKSSHIGELILKNLRKENEVAYIRYASVYRKFNGVKDFISTLESLKGSSKNQLASIS.

Over residues 1–11 (MQCPTCQNTDS) the composition is skewed to polar residues. The tract at residues 1–21 (MQCPTCQNTDSRVLESRSADS) is disordered. A zinc finger spans residues 3-34 (CPTCQNTDSRVLESRSADSGKSVRRRRECLNC). The ATP-cone domain occupies 49–139 (VSVLKKDGGR…VYRKFNGVKD (91 aa)).

The protein belongs to the NrdR family. Zn(2+) is required as a cofactor.

Its function is as follows. Negatively regulates transcription of bacterial ribonucleotide reductase nrd genes and operons by binding to NrdR-boxes. The protein is Transcriptional repressor NrdR of Prochlorococcus marinus (strain AS9601).